The primary structure comprises 426 residues: Histone-binding protein RBBP7 (426 aa).

Ala-2 carries the N-acetylalanine modification. Position 3 is a phosphoserine (Ser-3). Position 4 is an N6-acetyllysine; alternate (Lys-4). Lys-4 participates in a covalent cross-link: Glycyl lysine isopeptide (Lys-Gly) (interchain with G-Cter in SUMO2); alternate. A Glycyl lysine isopeptide (Lys-Gly) (interchain with G-Cter in ubiquitin); alternate cross-link involves residue Lys-4. Thr-10 bears the Phosphothreonine mark. 7 WD repeats span residues 47–122 (QWLP…KINH), 128–173 (RARY…LRLR), 181–217 (GLSWNSNLSGHLLSASDDHTVCLWDINAGPKEGKIVD), 228–269 (VVED…HLVD), 275–312 (VNCLSFNPYSEFILATGSADKTVALWDLRNLKLKLHTF), 318–370 (EIFQ…LFIH), and 377–404 (ISDFSWNPNEPWVICSVSEDNIMQIWQM). Ser-95 bears the Phosphoserine mark. Lys-101 participates in a covalent cross-link: Glycyl lysine isopeptide (Lys-Gly) (interchain with G-Cter in SUMO2). Residue Lys-119 is modified to N6-acetyllysine. A Glycyl lysine isopeptide (Lys-Gly) (interchain with G-Cter in SUMO2) cross-link involves residue Lys-155. Lys-159 carries the N6-acetyllysine; alternate modification. A Glycyl lysine isopeptide (Lys-Gly) (interchain with G-Cter in SUMO2); alternate cross-link involves residue Lys-159. At Ser-355 the chain carries Phosphoserine.

Belongs to the WD repeat RBAP46/RBAP48/MSI1 family. As to quaternary structure, binds directly to helix 1 of the histone fold of histone H4, a region that is not accessible when H4 is in chromatin. Subunit of the type B histone acetyltransferase (HAT) complex, composed of RBBP7 and HAT1. Subunit of the core histone deacetylase (HDAC) complex, which is composed of HDAC1, HDAC2, RBBP4 and RBBP7. The core HDAC complex associates with SIN3A, ARID4B/SAP180, SAP18, SAP30, SAP130, SUDS3/SAP45 and possibly ARID4A/RBP1 and ING1 to form the SIN3 HDAC complex. Component of the nucleosome remodeling and deacetylase (NuRD) repressor complex, composed of core proteins MTA1, MTA2, MTA3, RBBP4, RBBP7, HDAC1, HDAC2, MBD2, MBD3, and peripherally associated proteins CDK2AP1, CDK2AP2, GATAD2A, GATAD2B, CHD3, CHD4 and CHD5. The exact stoichiometry of the NuRD complex is unknown, and some subunits such as MBD2 and MBD3, GATAD2A and GATAD2B, and CHD3, CHD4 and CHD5 define mutually exclusive NuRD complexes. The NuRD complex may interact with MBD3L1. The NuRD complex may interact with MBD3L2. Subunit of the PRC2/EED-EZH2 complex, which is composed of at least EED, EZH2, RBBP4, RBBP7 and SUZ12. The PRC2/EED-EZH2 complex may also associate with HDAC1. Component of the NURF-1 ISWI chromatin remodeling complex (also called the nucleosome-remodeling factor (NURF) complex) at least composed of SMARCA1, BPTF, RBBP4 and RBBP7. Within the complex interacts with SMARCA1. Component of the BPFT-SMARCA1 complex at least composed of SMARCA1, BPFT, RBBP4 and RBBP7; the complex is catalytically inactive and does not remodel chromatin. Within the complex interacts with SMARCA1. Interacts with BRCA1. Interacts with CDK2AP1. Interacts with CENPA. Interacts with CHD3. Interacts with CHD4. Interacts with CREBBP, and this interaction may be enhanced by the binding of phosphorylated CREB1 to CREBBP. Interacts with HDAC7. Interacts with MTA1. Interacts with PWWP2B. Interacts with RB1 (via viral protein-binding domain). Interacts with SUV39H1.

The protein localises to the nucleus. Its function is as follows. Core histone-binding subunit that may target chromatin remodeling factors, histone acetyltransferases and histone deacetylases to their histone substrates in a manner that is regulated by nucleosomal DNA. Component of several complexes which regulate chromatin metabolism. These include the type B histone acetyltransferase (HAT) complex, which is required for chromatin assembly following DNA replication; the core histone deacetylase (HDAC) complex, which promotes histone deacetylation and consequent transcriptional repression; the nucleosome remodeling and histone deacetylase complex (the NuRD complex), which promotes transcriptional repression by histone deacetylation and nucleosome remodeling; and the PRC2/EED-EZH2 complex, which promotes repression of homeotic genes during development; and the NURF (nucleosome remodeling factor) complex. This is Histone-binding protein RBBP7 (RBBP7) from Pongo abelii (Sumatran orangutan).